The primary structure comprises 431 residues: Pheromone alpha factor receptor (431 aa).

Residues 1–49 (MSDAAPSLSNLFYDPTYNPGQSTINYTSIYGNGSTITFDELQGLVNSTV) lie on the Extracellular side of the membrane. N-linked (GlcNAc...) asparagine glycosylation is found at Asn25 and Asn32. The chain crosses the membrane as a helical span at residues 50–72 (TQAIMFGVRCGAAALTLIVMWMT). A Glycine zipper motif motif is present at residues 53–61 (IMFGVRCGA). Over 73 to 78 (SRSRKT) the chain is Cytoplasmic. The chain crosses the membrane as a helical span at residues 79 to 102 (PIFIINQVSLFLIILHSALYFKYL). Topologically, residues 103 to 132 (LSNYSSVTYALTGFPQFISRGDVHVYGATN) are extracellular. Residues 133–156 (IIQVLLVASIETSLVFQIKVIFTG) form a helical membrane-spanning segment. The Cytoplasmic portion of the chain corresponds to 157–163 (DNFKRIG). Residues 164–188 (LMLTSISFTLGIATVTMYFVSAVKG) form a helical membrane-spanning segment. Over 189-205 (MIVTYNDVSATQDKYFN) the chain is Extracellular. Residues 206–230 (ASTILLASSINFMSFVLVVKLILAI) traverse the membrane as a helical segment. Over 231 to 241 (RSRRFLGLKQF) the chain is Cytoplasmic. Residues 242-266 (DSFHILLIMSCQSLLVPSIIFILAY) form a helical membrane-spanning segment. At 267 to 275 (SLKPNQGTD) the chain is on the extracellular side. Residues 276-299 (VLTTVATLLAVLSLPLSSMWATAA) traverse the membrane as a helical segment. Residues 300 to 431 (NNASKTNTIT…KFWTEDNNNL (132 aa)) are Cytoplasmic-facing. Phosphoserine is present on residues Ser310 and Ser315. Position 329 is a phosphothreonine (Thr329). Position 331 is a phosphoserine (Ser331). Residue Lys337 forms a Glycyl lysine isopeptide (Lys-Gly) (interchain with G-Cter in ubiquitin) linkage. Ser360 bears the Phosphoserine mark. The residue at position 363 (Thr363) is a Phosphothreonine. Ser366 is subject to Phosphoserine. Lys374 participates in a covalent cross-link: Glycyl lysine isopeptide (Lys-Gly) (interchain with G-Cter in ubiquitin). Over residues 379 to 389 (QLPTPTSSKNT) the composition is skewed to polar residues. The segment at 379–406 (QLPTPTSSKNTRIGPFADASYKEGEVEP) is disordered. Position 382 is a phosphothreonine (Thr382). Ser385 and Ser386 each carry phosphoserine. Lys400 participates in a covalent cross-link: Glycyl lysine isopeptide (Lys-Gly) (interchain with G-Cter in ubiquitin). A phosphothreonine mark is found at Thr411 and Thr414. Lys422 is covalently cross-linked (Glycyl lysine isopeptide (Lys-Gly) (interchain with G-Cter in ubiquitin)).

The protein belongs to the G-protein coupled receptor 4 family. As to quaternary structure, homodimer. Might also for higher order homooligomers such as homotetramers. Oligomerization is mediated significantly by transmembrane domain 1 (TMD1), possibly in concert with the N-terminal extracellular domain and TMD2. Interaction with GPA1, its dedicated G-alpha protein. In terms of processing, undergoes hyperphosphorylation of the C-terminal cytoplasmic domain after binding of the alpha-factor, which leads to internalization by endocytosis. Post-translationally, monoubiquitination at Lys-337 triggers internalization of STE2. N-glycosylated. N-glycosylation may be involved in the sorting process for misfolded STE2 protein. In terms of tissue distribution, expressed in MATa strains but not in MATalpha strains.

It localises to the cell membrane. Functionally, fungal class D1 G-protein-coupled receptor that acts as an alpha-factor pheromone receptor performing pheromone-dependent signal transduction involved in cellular conjugation, mating projection assembly, and in cell fusion. Following alpha-factor-binding, the signal is transmitted via a tripartite G protein consisting of alpha-, beta- and gamma-subunits (GAP1, STE4 and STE8 respectively) that prepares the cell for conjugation. In the inactive state, the cytoplasmic end of transmembrane domain 7 (TMD7) is unstructured and packs between TMD1-6, blocking the G protein coupling site. Agonist binding results in the outward movement of the extracellular ends of TMD6 and TMD7 by 6 Angstroms. On the intracellular surface, the G protein coupling site is formed by a 20 Angstroms outward movement of the unstructured region in TMD7 that unblocks the site, and a 12 Angstroms inward movement of TMD6. The polypeptide is Pheromone alpha factor receptor (STE2) (Saccharomyces cerevisiae (strain ATCC 204508 / S288c) (Baker's yeast)).